A 150-amino-acid polypeptide reads, in one-letter code: Catabolic 3-dehydroquinase (150 aa).

Catalysis depends on Tyr-24, which acts as the Proton acceptor. The substrate site is built by Asn-75, His-81, and Asp-88. His-101 serves as the catalytic Proton donor. Substrate-binding positions include 102 to 103 (IS) and Arg-112.

This sequence belongs to the type-II 3-dehydroquinase family. In terms of assembly, homododecamer. Adopts a ring-like structure, composed of an arrangement of two hexameric rings stacked on top of one another.

It carries out the reaction 3-dehydroquinate = 3-dehydroshikimate + H2O. The protein operates within aromatic compound metabolism; 3,4-dihydroxybenzoate biosynthesis; 3,4-dihydroxybenzoate from 3-dehydroquinate: step 1/2. Functionally, is involved in the catabolism of quinate. Allows the utilization of quinate as carbon source via the beta-ketoadipate pathway. This Verticillium alfalfae (strain VaMs.102 / ATCC MYA-4576 / FGSC 10136) (Verticillium wilt of alfalfa) protein is Catabolic 3-dehydroquinase.